A 934-amino-acid chain; its full sequence is cGMP-dependent protein kinase, isozyme 2 forms cD5/T2 (934 aa).

Acidic residues predominate over residues 121-131 (QDQEHEELEDA). Disordered regions lie at residues 121 to 287 (QDQE…SQRR) and 301 to 327 (GEKAVRQKSPQISPAASSNGSSKDLNG). The segment covering 175–185 (RRSQTMSQPPS) has biased composition (polar residues). A compositionally biased stretch (low complexity) spans 200–213 (SKSSSAYSTFSSAA). 3 stretches are compositionally biased toward polar residues: residues 218–227 (DQVVICQQPQ), 249–258 (LSRSQTSVQR), and 308–324 (KSPQISPAASSNGSSKD). Residues 430–433 (GELA), 440–441 (RT), R545, 554–557 (GEKA), and 564–565 (RT) contribute to the 3',5'-cyclic GMP site. The region spanning 623 to 882 (LRVIATLGVG…ISEIQKHKWF (260 aa)) is the Protein kinase domain. ATP-binding positions include 629-637 (LGVGGFGRV) and K653. Catalysis depends on D747, which acts as the Proton acceptor. Positions 883 to 934 (DGFYWWGLQNCTLEPPIKPAVKSVVDTTNFDDYPPDPEGPPPDDVTGWDKDF) constitute an AGC-kinase C-terminal domain. Positions 910–934 (TNFDDYPPDPEGPPPDDVTGWDKDF) are disordered.

This sequence belongs to the protein kinase superfamily. AGC Ser/Thr protein kinase family. cGMP subfamily.

The catalysed reaction is L-seryl-[protein] + ATP = O-phospho-L-seryl-[protein] + ADP + H(+). It catalyses the reaction L-threonyl-[protein] + ATP = O-phospho-L-threonyl-[protein] + ADP + H(+). The chain is cGMP-dependent protein kinase, isozyme 2 forms cD5/T2 (for) from Drosophila melanogaster (Fruit fly).